Consider the following 248-residue polypeptide: Large ribosomal subunit protein uL4 (248 aa).

The segment at 69 to 92 is disordered; the sequence is HVPRLKNGSRAAKVPQAKGGREAH.

It belongs to the universal ribosomal protein uL4 family. Part of the 50S ribosomal subunit.

Its function is as follows. One of the primary rRNA binding proteins, this protein initially binds near the 5'-end of the 23S rRNA. It is important during the early stages of 50S assembly. It makes multiple contacts with different domains of the 23S rRNA in the assembled 50S subunit and ribosome. Functionally, forms part of the polypeptide exit tunnel. This chain is Large ribosomal subunit protein uL4, found in Methanoregula boonei (strain DSM 21154 / JCM 14090 / 6A8).